The following is a 358-amino-acid chain: Homoserine O-acetyltransferase (358 aa).

The AB hydrolase-1 domain occupies 41–343 (NAVLICHALT…DYGHDAFLVD (303 aa)). Serine 143 functions as the Nucleophile in the catalytic mechanism. Arginine 212 is a binding site for substrate. Active-site residues include aspartate 304 and histidine 337. Aspartate 338 contributes to the substrate binding site.

As to quaternary structure, homodimer.

Its subcellular location is the cytoplasm. The enzyme catalyses L-homoserine + acetyl-CoA = O-acetyl-L-homoserine + CoA. Its pathway is amino-acid biosynthesis; L-methionine biosynthesis via de novo pathway; O-acetyl-L-homoserine from L-homoserine: step 1/1. Transfers an acetyl group from acetyl-CoA to L-homoserine, forming acetyl-L-homoserine. Utilizes a ping-pong kinetic mechanism in which the acetyl group of acetyl-CoA is initially transferred to the enzyme to form an acetyl-enzyme intermediate before subsequent transfer to homoserine to form the final product, O-acetylhomoserine. The polypeptide is Homoserine O-acetyltransferase (Haemophilus influenzae (strain ATCC 51907 / DSM 11121 / KW20 / Rd)).